A 137-amino-acid polypeptide reads, in one-letter code: Large ribosomal subunit protein uL16 (137 aa).

Belongs to the universal ribosomal protein uL16 family. In terms of assembly, part of the 50S ribosomal subunit.

Binds 23S rRNA and is also seen to make contacts with the A and possibly P site tRNAs. This chain is Large ribosomal subunit protein uL16, found in Solidesulfovibrio magneticus (strain ATCC 700980 / DSM 13731 / RS-1) (Desulfovibrio magneticus).